Consider the following 271-residue polypeptide: Sulfur carrier protein FdhD (271 aa).

Residue Cys-114 is the Cysteine persulfide intermediate of the active site.

This sequence belongs to the FdhD family.

It localises to the cytoplasm. Its function is as follows. Required for formate dehydrogenase (FDH) activity. Acts as a sulfur carrier protein that transfers sulfur from IscS to the molybdenum cofactor prior to its insertion into FDH. This is Sulfur carrier protein FdhD from Agrobacterium fabrum (strain C58 / ATCC 33970) (Agrobacterium tumefaciens (strain C58)).